We begin with the raw amino-acid sequence, 316 residues long: Aspartate carbamoyltransferase catalytic subunit (316 aa).

Arg-66 and Thr-67 together coordinate carbamoyl phosphate. Lys-94 contributes to the L-aspartate binding site. Arg-116, His-146, and Gln-149 together coordinate carbamoyl phosphate. 2 residues coordinate L-aspartate: Arg-180 and Arg-235. Positions 276 and 277 each coordinate carbamoyl phosphate.

The protein belongs to the aspartate/ornithine carbamoyltransferase superfamily. ATCase family. Heterododecamer (2C3:3R2) of six catalytic PyrB chains organized as two trimers (C3), and six regulatory PyrI chains organized as three dimers (R2).

It catalyses the reaction carbamoyl phosphate + L-aspartate = N-carbamoyl-L-aspartate + phosphate + H(+). It participates in pyrimidine metabolism; UMP biosynthesis via de novo pathway; (S)-dihydroorotate from bicarbonate: step 2/3. In terms of biological role, catalyzes the condensation of carbamoyl phosphate and aspartate to form carbamoyl aspartate and inorganic phosphate, the committed step in the de novo pyrimidine nucleotide biosynthesis pathway. This chain is Aspartate carbamoyltransferase catalytic subunit, found in Stenotrophomonas maltophilia (strain R551-3).